The sequence spans 228 residues: 2-C-methyl-D-erythritol 4-phosphate cytidylyltransferase (228 aa).

It belongs to the IspD/TarI cytidylyltransferase family. IspD subfamily.

It catalyses the reaction 2-C-methyl-D-erythritol 4-phosphate + CTP + H(+) = 4-CDP-2-C-methyl-D-erythritol + diphosphate. It participates in isoprenoid biosynthesis; isopentenyl diphosphate biosynthesis via DXP pathway; isopentenyl diphosphate from 1-deoxy-D-xylulose 5-phosphate: step 2/6. Catalyzes the formation of 4-diphosphocytidyl-2-C-methyl-D-erythritol from CTP and 2-C-methyl-D-erythritol 4-phosphate (MEP). This chain is 2-C-methyl-D-erythritol 4-phosphate cytidylyltransferase, found in Actinobacillus pleuropneumoniae serotype 3 (strain JL03).